Consider the following 1856-residue polypeptide: Golgi-specific brefeldin A-resistance guanine nucleotide exchange factor 1 (1856 aa).

Residues 1-211 (MVDKNIYIIQ…EPKSYVGTNM (211 aa)) are DCB (dimerization and cyclophiln-binding); DCB:DCB domain and DCB:HUS domain interaction. Residues 1–378 (MVDKNIYIIQ…SVHDMDYVNP (378 aa)) are interaction with RAB1B. Disordered stretches follow at residues 215–256 (KMRA…NGAT) and 291–370 (DSGL…SASV). The span at 227 to 241 (WKKQKRSPRPPRHMT) shows a compositional bias: basic residues. The segment covering 316–328 (RESTTTESGSNEI) has biased composition (polar residues). Phosphoserine occurs at positions 349 and 352. Position 505 is a phosphothreonine (Thr-505). The tract at residues 528–548 (RIPSFVTELYINYDCDYYCAN) is HUS (homology upstream of Sec7); DCB:HUS domain interaction. The tract at residues 601-626 (QEKKETSRPSYEAVDSTQEANSTERA) is disordered. A compositionally biased stretch (polar residues) spans 615–625 (DSTQEANSTER). The region spanning 690 to 880 (ELIEIKNKKK…EDMYHAIKNE (191 aa)) is the SEC7 domain. A phosphatidylinositol-phosphate binding; required for translocation to the leading edge and for ARF1 activation upon GPCR signaling region spans residues 884–1370 (MPEEQTGLVR…LSRPSPSPLV (487 aa)). The span at 1284–1294 (TARADAPDAGA) shows a compositional bias: low complexity. The segment at 1284–1333 (TARADAPDAGAQSDSELPSYHQNDVSLDRGYTSDSEVYTDHGRPGKIHRS) is disordered. Residues 1295-1308 (QSDSELPSYHQNDV) are compositionally biased toward polar residues. The residue at position 1296 (Ser-1296) is a Phosphoserine. Residue Tyr-1314 is modified to Phosphotyrosine. Phosphoserine is present on residues Ser-1316, Ser-1318, and Ser-1333. The residue at position 1335 (Thr-1335) is a Phosphothreonine; by AMPK. Disordered regions lie at residues 1430-1484 (CKSQ…EGVP), 1739-1806 (THLT…PPLI), and 1837-1856 (PVPL…SEVN). Basic and acidic residues predominate over residues 1432–1446 (SQDKRGKSHKYDSKG). Phosphoserine occurs at positions 1475 and 1781. A compositionally biased stretch (low complexity) spans 1775-1793 (SSSSPGSPVASSPSRLSPS).

Can form homodimers and probably homotetramers. Interacts with COPG1; the interaction is independent on ARF1 activation. Interacts with ARF1, ARF3, ARF4 and ARF5. Interacts with RAB1B (GTP-bound form); required for GBF1 membrane association. Interacts with GGA1, GGA2 and GGA3. Interacts with USO1. Interacts (via SEC7 domain) with PNPLA2 (via C-terminus); the interaction is direct. Can form homodimers and probably homotetramers. Interacts with COPG1; the interaction is independent on ARF1 activation. Interacts with ARF1, ARF3, ARF4 and ARF5. Interacts with RAB1B (GTP-bound form); required for GBF1 membrane association. Interacts with GGA1, GGA2 and GGA3. Interacts with USO1. Interacts (via SEC7 domain) with PNPLA2 (via C-terminus); the interaction is direct. Interacts with ARMH3.

The protein localises to the golgi apparatus. It localises to the cis-Golgi network. It is found in the endoplasmic reticulum-Golgi intermediate compartment. Its subcellular location is the trans-Golgi network. The protein resides in the cytoplasm. The protein localises to the lipid droplet. It localises to the membrane. With respect to regulation, inhibited by brefeldin A (BFA). Inhibited by golgicide A (GCA). In terms of biological role, guanine-nucleotide exchange factor (GEF) for members of the Arf family of small GTPases involved in trafficking in the early secretory pathway; its GEF activity initiates the coating of nascent vesicles via the localized generation of activated ARFs through replacement of GDP with GTP. Recruitment to cis-Golgi membranes requires membrane association of Arf-GDP and can be regulated by ARF1, ARF3, ARF4 and ARF5. Involved in the recruitment of the COPI coat complex to cellular membranes such as the endoplasmic reticulum exit sites (ERES), and the endoplasmic reticulum-Golgi intermediate (ERGIC) and cis-Golgi compartments implicating ARF1 activation. Involved in COPI vesicle-dependent retrograde transport from the ERGIC and cis-Golgi compartments to the endoplasmic reticulum (ER). Involved in the trans-Golgi network recruitment of GGA1, GGA2, GGA3, BIG1, BIG2, and the AP-1 adaptor protein complex related to chlathrin-dependent transport; the function requires its GEF activity (probably at least in part on ARF4 and ARF5). Has GEF activity towards ARF1. Has in vitro GEF activity towards ARF5. Involved in the processing of PSAP. Required for the assembly of the Golgi apparatus. The AMPK-phosphorylated form is involved in Golgi disassembly during mitotis and under stress conditions. May be involved in the COPI vesicle-dependent recruitment of PNPLA2 to lipid droplets. In neutrophils, involved in G protein-coupled receptor (GPCR)-mediated chemotaxis und superoxide production. Proposed to be recruited by phosphatidylinositol-phosphates generated upon GPCR stimulation to the leading edge where it recruits and activates ARF1, and is involved in recruitment of GIT2 and the NADPH oxidase complex. Plays a role in maintaining mitochondrial morphology. This chain is Golgi-specific brefeldin A-resistance guanine nucleotide exchange factor 1 (GBF1), found in Cricetulus griseus (Chinese hamster).